The primary structure comprises 66 residues: Large ribosomal subunit protein bL35 (66 aa).

Over residues 1-26 (MPKMKTHRGAAKRVKRTASGKLKRSR) the composition is skewed to basic residues. Residues 1 to 49 (MPKMKTHRGAAKRVKRTASGKLKRSRAFTSHLFANKSTKQKRKLRKASL) are disordered.

The protein belongs to the bacterial ribosomal protein bL35 family.

The protein is Large ribosomal subunit protein bL35 of Staphylococcus carnosus (strain TM300).